Reading from the N-terminus, the 481-residue chain is Glutamyl-tRNA(Gln) amidotransferase subunit A (481 aa).

Residues Lys-76 and Ser-151 each act as charge relay system in the active site. Ser-175 functions as the Acyl-ester intermediate in the catalytic mechanism.

It belongs to the amidase family. GatA subfamily. As to quaternary structure, heterotrimer of A, B and C subunits.

It catalyses the reaction L-glutamyl-tRNA(Gln) + L-glutamine + ATP + H2O = L-glutaminyl-tRNA(Gln) + L-glutamate + ADP + phosphate + H(+). Its function is as follows. Allows the formation of correctly charged Gln-tRNA(Gln) through the transamidation of misacylated Glu-tRNA(Gln) in organisms which lack glutaminyl-tRNA synthetase. The reaction takes place in the presence of glutamine and ATP through an activated gamma-phospho-Glu-tRNA(Gln). The protein is Glutamyl-tRNA(Gln) amidotransferase subunit A of Neisseria meningitidis serogroup C (strain 053442).